Consider the following 757-residue polypeptide: Amine oxidase [copper-containing] 2 (757 aa).

At 1–4 (MNLK) the chain is on the cytoplasmic side. A helical membrane pass occupies residues 5–25 (VLLLLLGLSFLTVFALVYVLL). Residues 26 to 757 (TRQGSFSQSP…NLPSFSYEGL (732 aa)) lie on the Extracellular side of the membrane. Asn133, Asn198, and Asn226 each carry an N-linked (GlcNAc...) asparagine glycan. Asp381 acts as the Proton acceptor in catalysis. Cysteines 399 and 425 form a disulfide. Tyr466 serves as the catalytic Schiff-base intermediate with substrate; via topaquinone. Tyr466 is modified (2',4',5'-topaquinone). Positions 517 and 519 each coordinate Cu(2+). Ca(2+) contacts are provided by Asp526, Leu527, Asp528, Glu569, Glu638, Phe660, and Asn662. Asn663 carries an N-linked (GlcNAc...) asparagine glycan. Residues Glu664, Asp670, and Leu671 each coordinate Ca(2+). His681 contributes to the Cu(2+) binding site. A disulfide bond links Cys731 and Cys738.

It belongs to the copper/topaquinone oxidase family. In terms of assembly, homodimer; disulfide-linked. Probably forms heterodimers with AOC3. The cofactor is Cu(2+). Requires Ca(2+) as cofactor. It depends on L-topaquinone as a cofactor. Topaquinone (TPQ) is generated by copper-dependent autoxidation of a specific tyrosyl residue. Significantly much highly expressed in retina.

The protein localises to the cell membrane. The enzyme catalyses 2-phenylethylamine + O2 + H2O = 2-phenylacetaldehyde + H2O2 + NH4(+). It catalyses the reaction tryptamine + O2 + H2O = indole-3-acetaldehyde + H2O2 + NH4(+). The catalysed reaction is tyramine + O2 + H2O = (4-hydroxyphenyl)acetaldehyde + H2O2 + NH4(+). Catalyzes the oxidative deamination of primary amines to the corresponding aldehydes with the concomitant production of hydrogen peroxide and ammonia. Has a preference for 2-phenylethylamine, tryptamine and tyramine. Could also act on methylamine and benzylamine but much less efficiently. The sequence is that of Amine oxidase [copper-containing] 2 from Mus musculus (Mouse).